The chain runs to 207 residues: UPF0126 inner membrane protein YadS (207 aa).

The helical transmembrane segment at 1–21 (MLVYWLDIVGTAVFAISGVLL) threads the bilayer. Topologically, residues 22–29 (AGKLRMDP) are cytoplasmic. Residues 30–50 (FGVLVLGVVTAVGGGTIRDMA) form a helical membrane-spanning segment. Residues 51-58 (LDHGPVFW) lie on the Periplasmic side of the membrane. The chain crosses the membrane as a helical span at residues 59–79 (VKDPTDLVVAMVTSMLTIVLV). The Cytoplasmic segment spans residues 80 to 85 (RQPRRL). A helical transmembrane segment spans residues 86 to 106 (PKWMLPVLDAVGLAVFVGIGV). Residues 107–112 (NKAFNA) lie on the Periplasmic side of the membrane. A helical transmembrane segment spans residues 113–133 (EAGPLIAVCMGVITGVGGGII). The Cytoplasmic segment spans residues 134–148 (RDVLAREIPMILRTE). A helical membrane pass occupies residues 149-169 (IYATACIIGGIVHATAYYTFS). Position 170 (V170) is a topological domain, periplasmic. The chain crosses the membrane as a helical span at residues 171-191 (PLETASMMGMVVTLLIRLAAI). At 192–207 (RWHLKLPTFALDENGR) the chain is on the cytoplasmic side.

This sequence belongs to the UPF0126 family.

It localises to the cell inner membrane. The protein is UPF0126 inner membrane protein YadS (yadS) of Escherichia coli O6:H1 (strain CFT073 / ATCC 700928 / UPEC).